The following is an 874-amino-acid chain: Alanine--tRNA ligase (874 aa).

Histidine 564, histidine 568, cysteine 666, and histidine 670 together coordinate Zn(2+).

This sequence belongs to the class-II aminoacyl-tRNA synthetase family. Zn(2+) serves as cofactor.

It localises to the cytoplasm. The enzyme catalyses tRNA(Ala) + L-alanine + ATP = L-alanyl-tRNA(Ala) + AMP + diphosphate. In terms of biological role, catalyzes the attachment of alanine to tRNA(Ala) in a two-step reaction: alanine is first activated by ATP to form Ala-AMP and then transferred to the acceptor end of tRNA(Ala). Also edits incorrectly charged Ser-tRNA(Ala) and Gly-tRNA(Ala) via its editing domain. This is Alanine--tRNA ligase from Carboxydothermus hydrogenoformans (strain ATCC BAA-161 / DSM 6008 / Z-2901).